Consider the following 364-residue polypeptide: tRNA 2-selenouridine synthase (364 aa).

A Rhodanese domain is found at 14–137; that stretch reads LLADTPLIDV…LRQTAIQATW (124 aa). Residue cysteine 97 is the S-selanylcysteine intermediate of the active site.

It belongs to the SelU family. Monomer.

The enzyme catalyses 5-methylaminomethyl-2-thiouridine(34) in tRNA + selenophosphate + (2E)-geranyl diphosphate + H2O + H(+) = 5-methylaminomethyl-2-selenouridine(34) in tRNA + (2E)-thiogeraniol + phosphate + diphosphate. It carries out the reaction 5-methylaminomethyl-2-thiouridine(34) in tRNA + (2E)-geranyl diphosphate = 5-methylaminomethyl-S-(2E)-geranyl-thiouridine(34) in tRNA + diphosphate. The catalysed reaction is 5-methylaminomethyl-S-(2E)-geranyl-thiouridine(34) in tRNA + selenophosphate + H(+) = 5-methylaminomethyl-2-(Se-phospho)selenouridine(34) in tRNA + (2E)-thiogeraniol. It catalyses the reaction 5-methylaminomethyl-2-(Se-phospho)selenouridine(34) in tRNA + H2O = 5-methylaminomethyl-2-selenouridine(34) in tRNA + phosphate. Involved in the post-transcriptional modification of the uridine at the wobble position (U34) of tRNA(Lys), tRNA(Glu) and tRNA(Gln). Catalyzes the conversion of 2-thiouridine (S2U-RNA) to 2-selenouridine (Se2U-RNA). Acts in a two-step process involving geranylation of 2-thiouridine (S2U) to S-geranyl-2-thiouridine (geS2U) and subsequent selenation of the latter derivative to 2-selenouridine (Se2U) in the tRNA chain. This is tRNA 2-selenouridine synthase from Salmonella dublin (strain CT_02021853).